A 435-amino-acid polypeptide reads, in one-letter code: Glutamate-1-semialdehyde 2,1-aminomutase (435 aa).

An N6-(pyridoxal phosphate)lysine modification is found at Lys266.

Belongs to the class-III pyridoxal-phosphate-dependent aminotransferase family. HemL subfamily. In terms of assembly, homodimer. Pyridoxal 5'-phosphate serves as cofactor.

The protein localises to the cytoplasm. The enzyme catalyses (S)-4-amino-5-oxopentanoate = 5-aminolevulinate. It functions in the pathway porphyrin-containing compound metabolism; protoporphyrin-IX biosynthesis; 5-aminolevulinate from L-glutamyl-tRNA(Glu): step 2/2. This is Glutamate-1-semialdehyde 2,1-aminomutase from Coxiella burnetii (strain Dugway 5J108-111).